Reading from the N-terminus, the 233-residue chain is LexA repressor (233 aa).

A DNA-binding region (H-T-H motif) is located at residues 26–46; it reads FDEMKDALDLRSKSGIHRLIT. Active-site for autocatalytic cleavage activity residues include serine 154 and lysine 192.

It belongs to the peptidase S24 family. Homodimer.

It carries out the reaction Hydrolysis of Ala-|-Gly bond in repressor LexA.. Represses a number of genes involved in the response to DNA damage (SOS response), including recA and lexA. In the presence of single-stranded DNA, RecA interacts with LexA causing an autocatalytic cleavage which disrupts the DNA-binding part of LexA, leading to derepression of the SOS regulon and eventually DNA repair. The polypeptide is LexA repressor (Nitrobacter hamburgensis (strain DSM 10229 / NCIMB 13809 / X14)).